A 395-amino-acid polypeptide reads, in one-letter code: Vacuolar protease A (395 aa).

A signal peptide spans 1–18; the sequence is MKGSLLLAGATLLGCTSA. A propeptide spans 19–72 (activation peptide); that stretch reads KLHSLKLKKVSLKEQLEHADIDVQIKSLGQKYMGIRPGQHEQQMFKEQTPIEAE. A Peptidase A1 domain is found at 87 to 392; that stretch reads YFSEISIGTP…DLGKGTVGLA (306 aa). Residue aspartate 105 is part of the active site. Cysteine 118 and cysteine 123 form a disulfide bridge. An N-linked (GlcNAc...) asparagine glycan is attached at asparagine 140. Residue aspartate 289 is part of the active site. A disulfide bridge links cysteine 318 with cysteine 351. Asparagine 335 carries N-linked (GlcNAc...) asparagine glycosylation.

Belongs to the peptidase A1 family.

The protein localises to the vacuole lumen. The protein resides in the secreted. It catalyses the reaction Hydrolysis of proteins with broad specificity for peptide bonds. Cleaves -Leu-Leu-|-Val-Tyr- bond in a synthetic substrate. Does not act on esters of Tyr or Arg.. Vacuolar aspartic endopeptidase which is probably also secreted and contributes to virulence. This Arthroderma otae (strain ATCC MYA-4605 / CBS 113480) (Microsporum canis) protein is Vacuolar protease A (PEP2).